The chain runs to 855 residues: Receptor-like protein kinase THESEUS 1 (855 aa).

An N-terminal signal peptide occupies residues 1–22 (MVFTKSLLVLLWFLSCYTTTTS). Residues 23–415 (SALFNPPDNY…GGSGSKSKKK (393 aa)) lie on the Extracellular side of the membrane. Asparagine 41, asparagine 64, asparagine 75, asparagine 114, asparagine 118, asparagine 136, asparagine 143, asparagine 154, asparagine 168, asparagine 225, asparagine 242, asparagine 288, asparagine 353, and asparagine 376 each carry an N-linked (GlcNAc...) asparagine glycan. Residues 416-436 (AVIIGSLVGAVTLILLIAVCC) traverse the membrane as a helical segment. Residues 437–855 (YCCLVASRKQ…FSQLVHPRGR (419 aa)) are Cytoplasmic-facing. One can recognise a Protein kinase domain in the interval 510–783 (FDESSLLGVG…GDVLWNLEYA (274 aa)). Residues 516-524 (LGVGGFGRV) and lysine 538 contribute to the ATP site. The active-site Proton acceptor is aspartate 634. Positions 822–855 (IDRGGVNSGTGTDDDAEDATTSAVFSQLVHPRGR) are disordered.

Belongs to the protein kinase superfamily. Ser/Thr protein kinase family. Autophosphorylated. In terms of tissue distribution, expressed in most vegetative tissues, including leaves, stems and roots, primarily in expanding cells and vascular tissue.

Its subcellular location is the cell membrane. Receptor-like protein kinase required for cell elongation during vegetative growth, mostly in a brassinosteroid-(BR-) independent manner. Mediates the response of growing plant cells to the perturbation of cellulose synthesis and may act as a cell-wall-integrity sensor. Controls ectopic-lignin accumulation in cellulose-deficient mutant backgrounds. The polypeptide is Receptor-like protein kinase THESEUS 1 (THE1) (Arabidopsis thaliana (Mouse-ear cress)).